Here is a 397-residue protein sequence, read N- to C-terminus: Protein irld-34 (397 aa).

This Caenorhabditis elegans protein is Protein irld-34.